We begin with the raw amino-acid sequence, 459 residues long: Proton-coupled folate transporter (459 aa).

Residue methionine 1 is modified to N-acetylmethionine. Residues 1-25 (MEGRANSPGEPRAWPTRSVLCRGCV) lie on the Cytoplasmic side of the membrane. The chain crosses the membrane as a helical span at residues 26-44 (EPLVFLANFALVLQGPVTT). Over 45-82 (QYLWHRFSADLGYNGTRHRDSCSNHSVDPIAQEVETLT) the chain is Extracellular. Residues asparagine 58 and asparagine 68 are each glycosylated (N-linked (GlcNAc...) asparagine). An intrachain disulfide couples cysteine 66 to cysteine 298. A helical transmembrane segment spans residues 83–108 (SHWTLYMNVGGFLVGLFSSTLLGAWS). The Cytoplasmic segment spans residues 109–112 (DCVG). Residues 113–135 (RRPLLVLASLGLLLQTVLSIFVV) traverse the membrane as a helical segment. Topologically, residues 136–140 (QLHLH) are extracellular. The chain crosses the membrane as a helical span at residues 141–154 (IGYLVLGRILCALL). The Cytoplasmic segment spans residues 155 to 177 (GDFSGLLAASFASVADVSSSRTR). H(+) is bound by residues aspartate 156 and glutamate 185. Residues 178–203 (TIRMALLEACIGVAGMLASFIGGFLL) traverse the membrane as a helical segment. At 204–208 (QEQVY) the chain is on the extracellular side. The helical transmembrane segment at 209-227 (VNPFWLALAVLTVMTLYAA) threads the bilayer. At 228 to 266 (FCFGETVKERTPTRLFTLRHHRSVIQLYVTQAPEKSRKH) the chain is on the cytoplasmic side. Residues 267–289 (LALYSLAIFVMITVHLGAQDILT) traverse the membrane as a helical segment. Residue histidine 281 coordinates H(+). Residues 290–302 (LYELSAPLCWDSR) lie on the Extracellular side of the membrane. A helical membrane pass occupies residues 303 to 325 (LISYGSAAQQLPYLTSLLGLRLL). The Cytoplasmic segment spans residues 326–331 (QYCLAD). A helical transmembrane segment spans residues 332–351 (TWVAEIGLVFNILGMMVFAF). Residues 352–355 (ATIT) lie on the Extracellular side of the membrane. A helical membrane pass occupies residues 356–376 (PLMFTGYGLLFLSLVVTPIIR). Residues 377-388 (AKLSRLVRQSEQ) lie on the Cytoplasmic side of the membrane. Residues 389 to 414 (GALFSALACVNGLAMLMASGIFNSLY) form a helical membrane-spanning segment. Over 415 to 422 (PATLNLMK) the chain is Extracellular. Residues 423–441 (GFPFLLAAGLLFIPAILMG) traverse the membrane as a helical segment. The Cytoplasmic segment spans residues 442-459 (ILERDNHCPEFQEFSQSP). Position 458 is a phosphoserine (serine 458).

This sequence belongs to the major facilitator superfamily. SLC46A family. Monomer. As to expression, expressed in retina and retinal pigment epithelium.

Its subcellular location is the cell membrane. The protein localises to the apical cell membrane. It localises to the basolateral cell membrane. It is found in the endosome membrane. The protein resides in the cytoplasm. It catalyses the reaction folate(in) + H(+)(in) = folate(out) + H(+)(out). It carries out the reaction (6S)-5-methyl-5,6,7,8-tetrahydrofolate(in) + H(+)(in) = (6S)-5-methyl-5,6,7,8-tetrahydrofolate(out) + H(+)(out). The enzyme catalyses methotrexate(in) + H(+)(in) = methotrexate(out) + H(+)(out). The catalysed reaction is pemetrexed(in) + H(+)(in) = pemetrexed(out) + H(+)(out). In terms of biological role, proton-coupled folate symporter that mediates folate absorption using an H(+) gradient as a driving force. Involved in the intestinal absorption of folates at the brush-border membrane of the proximal jejunum, and the transport from blood to cerebrospinal fluid across the choroid plexus. Functions at acidic pH via alternate outward- and inward-open conformation states. Protonation of residues in the outward open state primes the protein for transport. Binding of folate promotes breaking of salt bridge network and subsequent closure of the extracellular gate, leading to the inward-open state and release of protons and folate. Also able to transport antifolate drugs, such as methotrexate and pemetrexed. Involved in FOLR1-mediated endocytosis by serving as a route of export of folates from acidified endosomes. Also acts as a lower-affinity, pH-independent heme carrier protein and constitutes the main importer of heme in the intestine. Imports heme in the retina and retinal pigment epithelium, in neurons of the hippocampus, in hepatocytes and in the renal epithelial cells. Hence, participates in the trafficking of heme and increases intracellular iron content. The polypeptide is Proton-coupled folate transporter (Bos taurus (Bovine)).